Consider the following 155-residue polypeptide: 3-dehydroquinate dehydratase (155 aa).

Y22 acts as the Proton acceptor in catalysis. Residues N73, H79, and D86 each coordinate substrate. Catalysis depends on H99, which acts as the Proton donor. Residues 100–101 (IS) and R110 each bind substrate.

Belongs to the type-II 3-dehydroquinase family. As to quaternary structure, homododecamer.

It carries out the reaction 3-dehydroquinate = 3-dehydroshikimate + H2O. The protein operates within metabolic intermediate biosynthesis; chorismate biosynthesis; chorismate from D-erythrose 4-phosphate and phosphoenolpyruvate: step 3/7. In terms of biological role, catalyzes a trans-dehydration via an enolate intermediate. The chain is 3-dehydroquinate dehydratase from Campylobacter hominis (strain ATCC BAA-381 / DSM 21671 / CCUG 45161 / LMG 19568 / NCTC 13146 / CH001A).